The chain runs to 484 residues: Solute carrier family 40 member 1 (484 aa).

11 helical membrane-spanning segments follow: residues 58 to 78 (LLTAVYGVVEASAVAALGPIV), 94 to 114 (WLLLQGASFVAAGVSVTALLV), 123 to 143 (GFPAFVALVVVTNVSGALAAL), 189 to 209 (VLSGFFISFVSMEASAAALAA), 212 to 232 (LAAVWVQYWLFVSVYAGFPAL), 279 to 299 (VVLPGVALAFLYFTVLSFGTL), 308 to 328 (GIPAYVISLARGVSAAVGIAA), 346 to 366 (LWSIWAQWCCLLVCVASVWAG), 377 to 397 (LMGGVAASRLGLWMFDLAVMQ), 413 to 433 (GVQNSLQSMFDLLTYVMGIIV), and 442 to 462 (LIVLSFFLVTCAAAMYTMHVY).

This sequence belongs to the ferroportin (FP) (TC 2.A.100) family. SLC40A subfamily.

The protein localises to the membrane. Its function is as follows. May be involved in iron transport and iron homeostasis. The polypeptide is Solute carrier family 40 member 1 (Oryza sativa subsp. japonica (Rice)).